The primary structure comprises 395 residues: Synaptotagmin-8 (395 aa).

At 1–44 (MQADRSMKMGHVSNPLSTSAPVDATAGPNLIPDLITKIPWPRWI) the chain is on the extracellular side. Residues 45-65 (LFIAILAAGVLLVSCLLCVIC) form a helical; Signal-anchor for type III membrane protein membrane-spanning segment. Residues 66-395 (YCCHRQRHRK…PRLPLLRPRS (330 aa)) are Cytoplasmic-facing. 2 consecutive C2 domains span residues 113 to 229 (PWGQ…ESWY) and 241 to 370 (QMGE…AQWH).

The protein belongs to the synaptotagmin family. Homodimer or homooligomer. Homodimerization and homooligomerization do not depend on Ca(2+). Interacts with SYNCRIP isoform 2 C-terminus. Binds inositol 1,3,4,5-tetrakisphosphate (IP4). Binds to AP2 in a Ca(2+)-independent manner. Interacts with STX1A, STX1B and STX2; the interaction is Ca(2+)-dependent. Ubiquitous. Strongly expressed in heart, kidney, cerebral cortex, pancreas, and many insulin-secreting cells; lower expression in spleen. Broadly distributed in kidney.

It localises to the cell membrane. It is found in the cytoplasmic vesicle. The protein localises to the secretory vesicle. The protein resides in the acrosome. Its function is as follows. Involved in the trafficking and exocytosis of secretory vesicles in non-neuronal tissues. Mediates Ca(2+)-regulation of exocytosis acrosomal reaction in sperm. May mediate Ca(2+)-regulation of exocytosis in insulin secreted cells. The polypeptide is Synaptotagmin-8 (Syt8) (Rattus norvegicus (Rat)).